A 507-amino-acid polypeptide reads, in one-letter code: Histidine ammonia-lyase (507 aa).

Residues 141-143 (ASG) constitute a cross-link (5-imidazolinone (Ala-Gly)). The residue at position 142 (Ser142) is a 2,3-didehydroalanine (Ser).

The protein belongs to the PAL/histidase family. Contains an active site 4-methylidene-imidazol-5-one (MIO), which is formed autocatalytically by cyclization and dehydration of residues Ala-Ser-Gly.

It is found in the cytoplasm. It carries out the reaction L-histidine = trans-urocanate + NH4(+). Its pathway is amino-acid degradation; L-histidine degradation into L-glutamate; N-formimidoyl-L-glutamate from L-histidine: step 1/3. The sequence is that of Histidine ammonia-lyase from Burkholderia cenocepacia (strain HI2424).